The following is a 480-amino-acid chain: Coronin-2B (480 aa).

WD repeat units lie at residues 85 to 125 (GHQG…LKRN), 135 to 177 (GHSR…KMID), 179 to 217 (HTDVILCMSFNTDGSLLTTTCKDKKLRVIEPRSGRVLQE), 220 to 263 (CKNH…MPMI), and 265 to 308 (EEID…PYLS). Residues 436–479 (NELLRMFFRQQDEIRRLKEELAQKDIRLRQLQLELKNLRNNPKN) are a coiled coil.

Belongs to the WD repeat coronin family. In terms of assembly, binds to F-actin and to vinculin.

The protein localises to the cytoplasm. It localises to the cytoskeleton. Functionally, may play a role in the reorganization of neuronal actin structure. This is Coronin-2B (Coro2b) from Mus musculus (Mouse).